The sequence spans 463 residues: O-acetyltransferase SAT5 (463 aa).

Belongs to the trichothecene 3-O-acetyltransferase family.

It functions in the pathway mycotoxin biosynthesis. O-acetyltransferase; part of the satratoxin SC1 cluster involved in the biosynthesis of satratoxins, trichothecene mycotoxins that are associated with human food poisonings. Satratoxins are suggested to be made by products of multiple gene clusters (SC1, SC2 and SC3) that encode 21 proteins in all, including polyketide synthases, acetyltransferases, and other enzymes expected to modify the trichothecene skeleton. SC1 encodes 10 proteins, SAT1 to SAT10. The largest are SAT8, which encodes a putative polyketide synthase (PKS) with a conventional non-reducing architecture, and SAT10, a putative protein containing four ankyrin repeats and thus may be involved in protein scaffolding. The putative short-chain reductase SAT3 may assist the PKS in some capacity. SAT6 contains a secretory lipase domain and acts probably as a trichothecene esterase. SAT5 encodes a putative acetyltransferase, and so, with SAT6, may affect endogenous protection from toxicity. The probable transcription factor SAT9 may regulate the expression of the SC1 cluster. SC2 encodes proteins SAT11 to SAT16, the largest of which encodes the putative reducing PKS SAT13. SAT11 is a cytochrome P450 monooxygenase, while SAT14 and SAT16 are probable acetyltransferases. The SC2 cluster may be regulated by the transcription factor SAT15. SC3 is a small cluster that encodes 5 proteins, SAT17 to SAT21. SAT21 is a putative MFS-type transporter which may have a role in exporting secondary metabolites. The four other proteins putatively encoded in SC3 include the taurine hydroxylase-like protein SAT17, the O-methyltransferase SAT18, the acetyltransferase SAT19, and the Cys6-type zinc finger SAT20, the latter being probably involved in regulation of SC3 expression. This Stachybotrys chartarum (strain CBS 109288 / IBT 7711) (Toxic black mold) protein is O-acetyltransferase SAT5.